Consider the following 37-residue polypeptide: MKIRASVRKICEKCRLIRRRGRIIVICFNPRHKQRQG.

It belongs to the bacterial ribosomal protein bL36 family.

It localises to the plastid. The protein localises to the chloroplast. This chain is Large ribosomal subunit protein bL36c, found in Liriodendron tulipifera (Tuliptree).